We begin with the raw amino-acid sequence, 75 residues long: DNA-directed RNA polymerase subunit omega (75 aa).

The protein belongs to the RNA polymerase subunit omega family. In terms of assembly, in cyanobacteria the RNAP catalytic core is composed of 2 alpha, 1 beta, 1 beta', 1 gamma and 1 omega subunit. When a sigma factor is associated with the core the holoenzyme is formed, which can initiate transcription.

It carries out the reaction RNA(n) + a ribonucleoside 5'-triphosphate = RNA(n+1) + diphosphate. Its function is as follows. Promotes RNA polymerase assembly. Latches the N- and C-terminal regions of the beta' subunit thereby facilitating its interaction with the beta and alpha subunits. The protein is DNA-directed RNA polymerase subunit omega of Picosynechococcus sp. (strain ATCC 27264 / PCC 7002 / PR-6) (Agmenellum quadruplicatum).